Consider the following 533-residue polypeptide: NEDD8-activating enzyme E1 regulatory subunit (533 aa).

An interaction with uba3 region spans residues 330-343 (DMIADSDKFIKLQN).

The protein belongs to the ubiquitin-activating E1 family. ULA1 subfamily. Heterodimer of uba3 and nae1. The complex binds nedd8 and ube2m.

Its pathway is protein modification; protein neddylation. Its function is as follows. Regulatory subunit of the dimeric uba3-nae1 E1 enzyme. E1 activates nedd8 by first adenylating its C-terminal glycine residue with ATP, thereafter linking this residue to the side chain of the catalytic cysteine, yielding a nedd8-uba3 thioester and free AMP. E1 finally transfers nedd8 to the catalytic cysteine of ube2m. The covalent attachment of nedd8 to target proteins is known as 'neddylation' and the process is involved in the regulation of cell growth, viability and development. The protein is NEDD8-activating enzyme E1 regulatory subunit (nae1) of Danio rerio (Zebrafish).